A 582-amino-acid chain; its full sequence is MAPRKTVGILGGGQLGRMLTHPAALLGIPLLILDSGSFTPAKQTLLPPPSHSHPDGPFTSEPHIRKLASACDILTVEIEHVNADVLEAVEKEGLCEVQPSPKTIRLIQNKYDQKKYLAEKGVAVAPFEELPANPTEEDFKAIAGRLGLPLMLKAKTLAYDGRGNSPLKSTSSEDIQASLKFLGDRPLYAEGWAPFVKEVAVMVVRNKEGEVQSYDAVETIHRESILRVCLAPLRGERGVNQRARELAEKAVGHLEGAGIFGVEMFLMPDGELLLNEIAPRPHNSGHHTIEACLTSQFENHLRAILSLPLGSTALRVPSAAMVNILGASSTMDAIDKMADNALTVPGAAVHLYGKAESRKARKMGHITVTAESDAELNERLRTLLFAQPDAHADWIDLIAPPSPAPAHSHPKPLVGIIMGSDSDLPVMHPATKILEKFGVPYELTITSAHRTPERMVKYAKTAAGRGLRAIIAGAGGAAHLPGMVASETSLPVIGVPVKASVLDGVDSLYSIVQMPRGIPCATVGINNSTNAALLAIRILGTSVPALNKATEEYSKALEEEVLAKVDILEEEGWDKYIERLKK.

One can recognise an ATP-grasp domain in the interval 114–305 (KKYLAEKGVA…QFENHLRAIL (192 aa)). 143–200 (AGRLGLPLMLKAKTLAYDGRGNSPLKSTSSEDIQASLKFLGDRPLYAEGWAPFVKEVA) provides a ligand contact to ATP.

The protein in the C-terminal section; belongs to the AIR carboxylase family. Class I subfamily.

The catalysed reaction is 5-amino-1-(5-phospho-D-ribosyl)imidazole-4-carboxylate + H(+) = 5-amino-1-(5-phospho-beta-D-ribosyl)imidazole + CO2. The protein operates within purine metabolism; IMP biosynthesis via de novo pathway; 5-amino-1-(5-phospho-D-ribosyl)imidazole-4-carboxylate from 5-amino-1-(5-phospho-D-ribosyl)imidazole (carboxylase route): step 1/1. In Cryptococcus neoformans var. grubii serotype A (strain H99 / ATCC 208821 / CBS 10515 / FGSC 9487) (Filobasidiella neoformans var. grubii), this protein is Phosphoribosylaminoimidazole carboxylase (ADE2).